The chain runs to 321 residues: Sialic acid-binding periplasmic protein SiaP (321 aa).

The signal sequence occupies residues 1-22; the sequence is MKTINKITIAILTLSAAASVNA.

This sequence belongs to the bacterial solute-binding protein 7 family. As to quaternary structure, the complex comprises the extracytoplasmic solute receptor protein SiaP, and the two transmembrane proteins SiaQ and SiaM.

The protein localises to the periplasm. Part of the tripartite ATP-independent periplasmic (TRAP) transport system SiaPQM that catalyzes unidirectional Na(+)-dependent sialic acid uptake. Binds the common sialic acid N-acetylneuraminic acid (Neu5Ac) with a high affinity. This chain is Sialic acid-binding periplasmic protein SiaP, found in Vibrio cholerae serotype O1 (strain ATCC 39315 / El Tor Inaba N16961).